The primary structure comprises 56 residues: MADVSERTLQLSVLVAFASGVLLGWQANRLRRRYLDWRKRRLQDKLAATQKKLDLA.

Over 2 to 9 the chain is Mitochondrial matrix; it reads ADVSERTL. The chain crosses the membrane as a helical span at residues 10-27; it reads QLSVLVAFASGVLLGWQA. At 28 to 56 the chain is on the mitochondrial intermembrane side; the sequence is NRLRRRYLDWRKRRLQDKLAATQKKLDLA.

Interacts with mitochondrial trifunctional enzyme, a heterotetrameric complex composed of 2 HADHA subunits and 2 HADHB subunits. Interacts with cytochrome b5 reductase CYB5R3; the interaction is required to maintain cellular lipid composition and leads to stimulation of mitochondrial respiratory complex I activity. Interacts with ATP synthase subunit ATP5F1B/ATP5B.

The protein localises to the mitochondrion inner membrane. Its function is as follows. Positively regulates mitochondrial complex assembly and/or stability. Increases mitochondrial membrane potential while decreasing mitochondrial reactive oxygen species. Increases mitochondrial respiration rate. Increased mitochondrial respiratory activity promotes myogenic differentiation which facilitates muscle growth and regeneration. Increases mitochondrial calcium retention capacity. Plays a role in maintenance of cellular lipid composition through its interaction with cytochrome b5 reductase CYB5R3 which is required for mitochondrial respiratory complex I activity. Interacts with the mitochondrial trifunctional enzyme complex (MTE) and enhances fatty acid beta-oxidation. Not required for MTE formation or stability. Modulates triglyceride clearance in adipocytes through its role in regulating fatty acid beta-oxidation and lipolysis. The protein is Mitoregulin of Homo sapiens (Human).